The following is a 43-amino-acid chain: Snaclec lebecetin subunit beta (43 aa).

A C-type lectin domain is found at 1-43 (ALNCASGWSGGYDQHCYKVFDIPPSWAADEKFCKQQTSGGHLV). C4 and C16 are oxidised to a cystine.

In terms of assembly, heterodimer of subunits alpha and beta; disulfide-linked. It depends on Ca(2+) as a cofactor. Post-translationally, glycosylated. Expressed by the venom gland.

Its subcellular location is the secreted. Its function is as follows. Binds to the platelet GPIb/IX/V receptor system and inhibits ristocetin-induced platelet aggregation in human platelet-rich plasma. Strongly inhibits platelet aggregation induced by ADP, calcium ionophore, thrombin and collagen. Does not inhibit U46619-induced platelet aggregation. The polypeptide is Snaclec lebecetin subunit beta (Macrovipera lebetinus (Levantine viper)).